A 318-amino-acid chain; its full sequence is MASQYQLEFEKPVFELEQKIQELADIAGDNVELKTEVVKLEKKVDKMREVIFANLSRWQMVQVARHIDRPFTLDYLTHIFTDFVELHGDRLFGDDHAIVGGMAKLDGEPVMVIGHQKGRDTKEKVYRNFGMPNPEGYRKALRLMEMAERFRMPIITFVDTPGAYPGIGAEERGQAEAIARNLREMAALTVPIIVVITGEGGSGGALAIAVGDRVLMLEYSIYAVISPEGCAAILWSDGTKGAQAAEALKLTAPDLKELDVIDEIVKEPLGGAHRDHETMAKNLHEALARHLKELKALSVEQLVEGRYQKFRKMSRFAE.

Positions 39-293 (KLEKKVDKMR…HEALARHLKE (255 aa)) constitute a CoA carboxyltransferase C-terminal domain.

It belongs to the AccA family. Acetyl-CoA carboxylase is a heterohexamer composed of biotin carboxyl carrier protein (AccB), biotin carboxylase (AccC) and two subunits each of ACCase subunit alpha (AccA) and ACCase subunit beta (AccD).

The protein localises to the cytoplasm. The catalysed reaction is N(6)-carboxybiotinyl-L-lysyl-[protein] + acetyl-CoA = N(6)-biotinyl-L-lysyl-[protein] + malonyl-CoA. It participates in lipid metabolism; malonyl-CoA biosynthesis; malonyl-CoA from acetyl-CoA: step 1/1. Component of the acetyl coenzyme A carboxylase (ACC) complex. First, biotin carboxylase catalyzes the carboxylation of biotin on its carrier protein (BCCP) and then the CO(2) group is transferred by the carboxyltransferase to acetyl-CoA to form malonyl-CoA. This is Acetyl-coenzyme A carboxylase carboxyl transferase subunit alpha from Geobacter metallireducens (strain ATCC 53774 / DSM 7210 / GS-15).